Consider the following 435-residue polypeptide: Trigger factor (435 aa).

Residues Gly161 to Pro246 enclose the PPIase FKBP-type domain.

Belongs to the FKBP-type PPIase family. Tig subfamily.

The protein resides in the cytoplasm. The catalysed reaction is [protein]-peptidylproline (omega=180) = [protein]-peptidylproline (omega=0). Its function is as follows. Involved in protein export. Acts as a chaperone by maintaining the newly synthesized protein in an open conformation. Functions as a peptidyl-prolyl cis-trans isomerase. In Colwellia psychrerythraea (strain 34H / ATCC BAA-681) (Vibrio psychroerythus), this protein is Trigger factor.